Here is a 678-residue protein sequence, read N- to C-terminus: Glycine--tRNA ligase beta subunit (678 aa).

This sequence belongs to the class-II aminoacyl-tRNA synthetase family. In terms of assembly, tetramer of two alpha and two beta subunits.

The protein resides in the cytoplasm. The catalysed reaction is tRNA(Gly) + glycine + ATP = glycyl-tRNA(Gly) + AMP + diphosphate. The chain is Glycine--tRNA ligase beta subunit from Streptococcus thermophilus (strain ATCC BAA-491 / LMD-9).